The sequence spans 536 residues: Phosphoenolpyruvate carboxykinase (ATP) (536 aa).

Substrate is bound by residues Arg-61, Tyr-195, and Lys-201. ATP contacts are provided by residues Lys-201, His-220, and 236 to 244; that span reads GLSGTGKTT. Lys-201 and His-220 together coordinate Mn(2+). Asp-257 is a binding site for Mn(2+). Residues Glu-285, Arg-323, and Thr-448 each coordinate ATP. Arg-323 is a binding site for substrate.

It belongs to the phosphoenolpyruvate carboxykinase (ATP) family. Mn(2+) is required as a cofactor.

The protein localises to the cytoplasm. The catalysed reaction is oxaloacetate + ATP = phosphoenolpyruvate + ADP + CO2. It participates in carbohydrate biosynthesis; gluconeogenesis. Involved in the gluconeogenesis. Catalyzes the conversion of oxaloacetate (OAA) to phosphoenolpyruvate (PEP) through direct phosphoryl transfer between the nucleoside triphosphate and OAA. The polypeptide is Phosphoenolpyruvate carboxykinase (ATP) (Methylobacterium nodulans (strain LMG 21967 / CNCM I-2342 / ORS 2060)).